Consider the following 763-residue polypeptide: Xaa-Pro dipeptidyl-peptidase (763 aa).

Active-site charge relay system residues include serine 348, aspartate 468, and histidine 498.

It belongs to the peptidase S15 family. As to quaternary structure, homodimer.

The protein resides in the cytoplasm. The enzyme catalyses Hydrolyzes Xaa-Pro-|- bonds to release unblocked, N-terminal dipeptides from substrates including Ala-Pro-|-p-nitroanilide and (sequentially) Tyr-Pro-|-Phe-Pro-|-Gly-Pro-|-Ile.. Removes N-terminal dipeptides sequentially from polypeptides having unsubstituted N-termini provided that the penultimate residue is proline. The polypeptide is Xaa-Pro dipeptidyl-peptidase (pepX) (Lactococcus lactis subsp. lactis (strain IL1403) (Streptococcus lactis)).